The following is a 256-amino-acid chain: DNA polymerase sliding clamp 2 (256 aa).

This sequence belongs to the PCNA family. Homotrimer. The subunits circularize to form a toroid; DNA passes through its center. Replication factor C (RFC) is required to load the toroid on the DNA.

Functionally, sliding clamp subunit that acts as a moving platform for DNA processing. Responsible for tethering the catalytic subunit of DNA polymerase and other proteins to DNA during high-speed replication. The chain is DNA polymerase sliding clamp 2 from Pyrobaculum aerophilum (strain ATCC 51768 / DSM 7523 / JCM 9630 / CIP 104966 / NBRC 100827 / IM2).